The following is a 248-amino-acid chain: 14-3-3-like protein G-BOX factor 14 kappa (248 aa).

A phosphoserine mark is found at Ser-70, Ser-112, and Ser-193. Thr-214 is modified (phosphothreonine).

The protein belongs to the 14-3-3 family. In terms of assembly, interacts with the isocitrate dehydrogenase IDH3, and malate dehydrogenases MDH1 and MDH2. Interacts with CINV1.

The protein localises to the nucleus. It localises to the cytoplasm. Functionally, is associated with a DNA binding complex that binds to the G box, a well-characterized cis-acting DNA regulatory element found in plant genes. Involved in the regulation of nutrient metabolism. Negative regulator of freezing tolerance that modulates cold-responsive C-repeat-binding factors (CBF) DREB1A AND DREB1B proteins stability by facilitating their ubiquitin-mediated degradation; this processus is counteracted by B1L. The chain is 14-3-3-like protein G-BOX factor 14 kappa from Arabidopsis thaliana (Mouse-ear cress).